Reading from the N-terminus, the 614-residue chain is MPQPTRTDPALIRNFCIIAHIDHGKSTLADRMLQLTGVVEERQMRAQYLDRMDIERERGITIKSQAVRLPFTALDDVTYILNLIDTPGHVDFSYEVSRSLAACEGAILLVDAAQGIEAQTLANLYMALEHDLTIIPVLNKIDLPAAQPEKYAAELAGIIGCEPSDVLRVSAKTGEGVEELLNEIVARIPPPVGNADGPARALIFDSVYDTYRGVVTYVRVVDGQITNRERIQMMSTGATHEMLEVGVISPEPTKVDSLGVGEVGYLITGVKDVRQSRVGDTITSAAAPAAEVLPGYRDPKPMVFSGLYPIDGTDYPVLRDALEKLQLNDAALVFEPETSAALGFGFRCGFLGLLHLEITRDRLEREFDLALISTAPNVVYRVRMEDGTEHTVTNPSEFPSGKIAEIREPVVKATVLTPSDYVGPIMELCQGRRGVLDGMEYLSEDRVEMRYTLPLAEIVFDFFDQLKSRTKGYASLDYEPSGEQAADLVKVDILLQGQVVDAFSAIVHRDNAYSYGAEMTKKLRELIPRQQFEVPIQAAIGSRVIARENIRALRKDVLAKCYGGDISRKRKLLEKQKEGKKRMKMVGRVEVPQEAFISALSTESSGEGKDGKKK.

One can recognise a tr-type G domain in the interval 10–192 (ALIRNFCIIA…EIVARIPPPV (183 aa)). Residues 22–27 (DHGKST) and 139–142 (NKID) contribute to the GTP site.

This sequence belongs to the TRAFAC class translation factor GTPase superfamily. Classic translation factor GTPase family. LepA subfamily.

It is found in the cell membrane. It catalyses the reaction GTP + H2O = GDP + phosphate + H(+). In terms of biological role, required for accurate and efficient protein synthesis under certain stress conditions. May act as a fidelity factor of the translation reaction, by catalyzing a one-codon backward translocation of tRNAs on improperly translocated ribosomes. Back-translocation proceeds from a post-translocation (POST) complex to a pre-translocation (PRE) complex, thus giving elongation factor G a second chance to translocate the tRNAs correctly. Binds to ribosomes in a GTP-dependent manner. The polypeptide is Elongation factor 4 (Thermobifida fusca (strain YX)).